The chain runs to 383 residues: Putative glutamate--cysteine ligase 2-1 (383 aa).

Belongs to the glutamate--cysteine ligase type 2 family. YbdK subfamily.

The enzyme catalyses L-cysteine + L-glutamate + ATP = gamma-L-glutamyl-L-cysteine + ADP + phosphate + H(+). ATP-dependent carboxylate-amine ligase which exhibits weak glutamate--cysteine ligase activity. The protein is Putative glutamate--cysteine ligase 2-1 of Nocardia farcinica (strain IFM 10152).